Consider the following 248-residue polypeptide: Granulin (248 aa).

Belongs to the polyhedrin family.

Functionally, component of the virus occlusion bodies, which are large proteinaceous structures, that protect the virus from the outside environment for extended periods until they are ingested by insect larvae. The polypeptide is Granulin (Choristoneura fumiferana (Spruce budworm moth)).